Here is a 489-residue protein sequence, read N- to C-terminus: MGLFGMMKFAHTHHLVKRRGLGAPAGYFTPIAVDLWNVMYTLVVKYQRRYPSYDREAITLHCLCRLLKVFTQKSLFPIFVTDRGVNCMEPVVFGAKAILARTTAQCRTDEEASDVDASPPPSPITDSRPSSAFSNMRRRGTSLASGTRGTAGSGAALPSAAPSKPALRLAHLFCIRVLRALGYAYINSGQLEADDACANLYHTNTVAYVYTTDTDLLLMGCDIVLDISACYIPTINCRDILKYFKMSYPQFLALFVRCHTDLHPNNTYASVEDVLRECHWTPPSRSQTRRAIRREHTSSRSTETRPPLPPAAGGTETRVSWTEILTQQIAGGYEDDEDLPLDPRDVTGGHPGPRSSSSEILTPPELVQVPNAQLLEEHRSYVANPRRHVIHDAPESLDWLPDPMTITELVEHRYIKYVISLIGPKERGPWTLLKRLPIYQDIRDENLARSIVTRHITAPDIADRFLEQLRTQAPPPAFYKDVLAKFWDE.

Disordered stretches follow at residues 110–135 (EEAS…AFSN), 142–161 (SLAS…PSAA), 285–319 (RSQT…ETRV), and 332–364 (GYED…LTPP). Over residues 124-134 (ITDSRPSSAFS) the composition is skewed to polar residues.

It belongs to the herpesviridae VHS protein family. In terms of assembly, interacts with human EIF4H, EIF4A1 and EIF4A2; interaction with eIF4AI and EIF4A2 presumably allows Vhs protein to associate with the eIF4F cap-binding complex.

It is found in the virion. Its function is as follows. Minor structural protein that acts as an endoribonuclease during lytic infection. Degrades host mRNAs in the cytoplasm by cutting them at preferred sites, including some in regions of translation initiation. Together with inhibition of host splicing by ICP27, contributes to an overall decrease in host protein synthesis. Also, after the onset of viral transcription, accelerates the turnover of viral mRNA, thereby facilitating the sequential expression of different classes of viral genes. Binds translation initiation factors eIF4H, eIF4AI, and eIF4AII, thereby may interact directly with the translation initiation complex and thus digest specifically mRNAs. Also impedes antigen presentation by major histocompatibility complex class I and class II molecules, inhibits secretion of cytokines that would otherwise recruit lymphocytes and neutrophils cells to the site of infection and blocks the activation of dendritic cells. Plays a role in the inhibition of interferon-beta activation by the cGAS/STING pathway. Mechanistically, down-regulates the expression of host cGAS/MB21D1. Also decreases the accumulation of other interferon-induced mRNAs such as host IFIT3 or CH25H to subvert their antiviral activity. The protein is Virion host shutoff protein (UL41) of Human herpesvirus 1 (strain 17) (HHV-1).